A 479-amino-acid chain; its full sequence is uncharacterized protein (479 aa).

8 helical membrane passes run 25 to 45, 63 to 83, 110 to 130, 133 to 153, 175 to 195, 229 to 249, 287 to 307, and 328 to 348; these read VVFVAIMGYLLFKNLLFLFFF, IAMIIAVAVSIVLVLMALAGG, LFGPIVGIFSAATIDFLTVIF, GVFNVGYVLGAILTGMIAGIL, VLSIGMVIAAFLITQFFVLGI, ILLYFTIAIVIAMLVLYIVWL, LILNVITLASTSLLMINIAFI, and LFAPVIFLLDIIVIYPILLLL.

This sequence in the C-terminal section; belongs to the GatC family.

Its subcellular location is the cell membrane. This is an uncharacterized protein from Mycoplasma pneumoniae (strain ATCC 29342 / M129 / Subtype 1) (Mycoplasmoides pneumoniae).